Reading from the N-terminus, the 509-residue chain is GMP synthase [glutamine-hydrolyzing] (509 aa).

One can recognise a Glutamine amidotransferase type-1 domain in the interval 4 to 194 (LVLVVDFGGQ…LYNICGLENS (191 aa)). Catalysis depends on Cys-81, which acts as the Nucleophile. Residues His-168 and Glu-170 contribute to the active site. In terms of domain architecture, GMPS ATP-PPase spans 195-384 (WSMASFAEEK…LGIPHHLVWR (190 aa)). 222 to 228 (SGGVDSS) provides a ligand contact to ATP.

In terms of assembly, homodimer.

It catalyses the reaction XMP + L-glutamine + ATP + H2O = GMP + L-glutamate + AMP + diphosphate + 2 H(+). Its pathway is purine metabolism; GMP biosynthesis; GMP from XMP (L-Gln route): step 1/1. Catalyzes the synthesis of GMP from XMP. This chain is GMP synthase [glutamine-hydrolyzing], found in Clostridium perfringens (strain 13 / Type A).